The following is a 148-amino-acid chain: Snaclec alboaggregin-D subunit beta (148 aa).

An N-terminal signal peptide occupies residues 1 to 23 (MGRFISVSFGLLVVFLSLSGAGA). C27 and C38 are disulfide-bonded. A C-type lectin domain is found at 34 to 145 (YDLYCYKVFK…CNSTYSFVCK (112 aa)). A glycan (N-linked (GlcNAc...) asparagine) is linked at N47. Disulfide bonds link C55-C144 and C121-C136. An N-linked (GlcNAc...) asparagine glycan is attached at N137.

In terms of assembly, tetramer of heterodimers of alpha and beta subunits (alphabeta)(4); disulfide-linked. In terms of tissue distribution, expressed by the venom gland.

Its subcellular location is the secreted. Snaclec that induces human platelet aggregation in the absence of any cofactor with the EC(50) of 0.25 nM and causes tyrosine phosphorylation in human platelets. Antibodies against either platelet GPIbalpha (GP1BA) or GPVI (GP6) inhibit alboaggregin D-induced platelet aggregation. Only the combination of these two antibodies completely inhibit aggregation, suggesting that it acts through both GPIbalpha (GP1BA) and GPVI (GP6). The polypeptide is Snaclec alboaggregin-D subunit beta (Trimeresurus albolabris (White-lipped pit viper)).